Here is a 120-residue protein sequence, read N- to C-terminus: Large ribosomal subunit protein uL18 (120 aa).

This sequence belongs to the universal ribosomal protein uL18 family. Part of the 50S ribosomal subunit; part of the 5S rRNA/L5/L18/L25 subcomplex. Contacts the 5S and 23S rRNAs.

Its function is as follows. This is one of the proteins that bind and probably mediate the attachment of the 5S RNA into the large ribosomal subunit, where it forms part of the central protuberance. This chain is Large ribosomal subunit protein uL18, found in Rhizobium leguminosarum bv. trifolii (strain WSM2304).